A 40-amino-acid polypeptide reads, in one-letter code: Photosystem II reaction center protein J (40 aa).

The helical transmembrane segment at 8 to 28 threads the bilayer; sequence IPLWLIGTVTGIIVIGLLGVF.

The protein belongs to the PsbJ family. As to quaternary structure, PSII is composed of 1 copy each of membrane proteins PsbA, PsbB, PsbC, PsbD, PsbE, PsbF, PsbH, PsbI, PsbJ, PsbK, PsbL, PsbM, PsbT, PsbX, PsbY, PsbZ, Psb30/Ycf12, at least 3 peripheral proteins of the oxygen-evolving complex and a large number of cofactors. It forms dimeric complexes.

Its subcellular location is the plastid. It is found in the chloroplast thylakoid membrane. One of the components of the core complex of photosystem II (PSII). PSII is a light-driven water:plastoquinone oxidoreductase that uses light energy to abstract electrons from H(2)O, generating O(2) and a proton gradient subsequently used for ATP formation. It consists of a core antenna complex that captures photons, and an electron transfer chain that converts photonic excitation into a charge separation. This Pinus thunbergii (Japanese black pine) protein is Photosystem II reaction center protein J.